Here is a 206-residue protein sequence, read N- to C-terminus: Histidine biosynthesis bifunctional protein HisIE (206 aa).

Residues 1–114 (MLKKINFIDI…FQVPSENLFF (114 aa)) form a phosphoribosyl-AMP cyclohydrolase region. The tract at residues 115 to 206 (LHDLDCMLKF…NLKMRSNKQV (92 aa)) is phosphoribosyl-ATP pyrophosphohydrolase.

In the N-terminal section; belongs to the PRA-CH family. The protein in the C-terminal section; belongs to the PRA-PH family.

Its subcellular location is the cytoplasm. It catalyses the reaction 1-(5-phospho-beta-D-ribosyl)-ATP + H2O = 1-(5-phospho-beta-D-ribosyl)-5'-AMP + diphosphate + H(+). The catalysed reaction is 1-(5-phospho-beta-D-ribosyl)-5'-AMP + H2O = 1-(5-phospho-beta-D-ribosyl)-5-[(5-phospho-beta-D-ribosylamino)methylideneamino]imidazole-4-carboxamide. It participates in amino-acid biosynthesis; L-histidine biosynthesis; L-histidine from 5-phospho-alpha-D-ribose 1-diphosphate: step 2/9. It functions in the pathway amino-acid biosynthesis; L-histidine biosynthesis; L-histidine from 5-phospho-alpha-D-ribose 1-diphosphate: step 3/9. The protein is Histidine biosynthesis bifunctional protein HisIE (hisI) of Buchnera aphidicola subsp. Baizongia pistaciae (strain Bp).